We begin with the raw amino-acid sequence, 211 residues long: Probable chemoreceptor glutamine deamidase CheD (211 aa).

Belongs to the CheD family.

It carries out the reaction L-glutaminyl-[protein] + H2O = L-glutamyl-[protein] + NH4(+). In terms of biological role, probably deamidates glutamine residues to glutamate on methyl-accepting chemotaxis receptors (MCPs), playing an important role in chemotaxis. The polypeptide is Probable chemoreceptor glutamine deamidase CheD (Hahella chejuensis (strain KCTC 2396)).